Here is a 217-residue protein sequence, read N- to C-terminus: Thiamine-phosphate synthase (217 aa).

Residues 42–46 and D77 each bind 4-amino-2-methyl-5-(diphosphooxymethyl)pyrimidine; that span reads QYRDK. 2 residues coordinate Mg(2+): D78 and D97. Residue S116 coordinates 4-amino-2-methyl-5-(diphosphooxymethyl)pyrimidine. Residue 143-145 participates in 2-[(2R,5Z)-2-carboxy-4-methylthiazol-5(2H)-ylidene]ethyl phosphate binding; that stretch reads TTS. K146 provides a ligand contact to 4-amino-2-methyl-5-(diphosphooxymethyl)pyrimidine. 2-[(2R,5Z)-2-carboxy-4-methylthiazol-5(2H)-ylidene]ethyl phosphate contacts are provided by residues G174 and 194–195; that span reads IS.

Belongs to the thiamine-phosphate synthase family. Mg(2+) serves as cofactor.

The enzyme catalyses 2-[(2R,5Z)-2-carboxy-4-methylthiazol-5(2H)-ylidene]ethyl phosphate + 4-amino-2-methyl-5-(diphosphooxymethyl)pyrimidine + 2 H(+) = thiamine phosphate + CO2 + diphosphate. It catalyses the reaction 2-(2-carboxy-4-methylthiazol-5-yl)ethyl phosphate + 4-amino-2-methyl-5-(diphosphooxymethyl)pyrimidine + 2 H(+) = thiamine phosphate + CO2 + diphosphate. The catalysed reaction is 4-methyl-5-(2-phosphooxyethyl)-thiazole + 4-amino-2-methyl-5-(diphosphooxymethyl)pyrimidine + H(+) = thiamine phosphate + diphosphate. It functions in the pathway cofactor biosynthesis; thiamine diphosphate biosynthesis; thiamine phosphate from 4-amino-2-methyl-5-diphosphomethylpyrimidine and 4-methyl-5-(2-phosphoethyl)-thiazole: step 1/1. In terms of biological role, condenses 4-methyl-5-(beta-hydroxyethyl)thiazole monophosphate (THZ-P) and 2-methyl-4-amino-5-hydroxymethyl pyrimidine pyrophosphate (HMP-PP) to form thiamine monophosphate (TMP). The protein is Thiamine-phosphate synthase of Lactiplantibacillus plantarum (strain ATCC BAA-793 / NCIMB 8826 / WCFS1) (Lactobacillus plantarum).